The following is a 102-amino-acid chain: Cytochrome b (102 aa).

3 helical membrane passes run Phe1–Met21, Trp45–Ile66, and Trp81–Leu101. Residues His51 and His65 each coordinate heme b.

It belongs to the cytochrome b family. The cytochrome bc1 complex contains 3 respiratory subunits (MT-CYB, CYC1 and UQCRFS1), 2 core proteins (UQCRC1 and UQCRC2) and probably 6 low-molecular weight proteins. Heme b is required as a cofactor.

The protein resides in the mitochondrion inner membrane. In terms of biological role, component of the ubiquinol-cytochrome c reductase complex (complex III or cytochrome b-c1 complex) that is part of the mitochondrial respiratory chain. The b-c1 complex mediates electron transfer from ubiquinol to cytochrome c. Contributes to the generation of a proton gradient across the mitochondrial membrane that is then used for ATP synthesis. In Ambystoma tigrinum (Eastern tiger salamander), this protein is Cytochrome b (mt-cyb).